A 302-amino-acid polypeptide reads, in one-letter code: Elongation factor Ts (302 aa).

The interval 82–85 is involved in Mg(2+) ion dislocation from EF-Tu; sequence TDFV.

It belongs to the EF-Ts family.

It is found in the cytoplasm. Functionally, associates with the EF-Tu.GDP complex and induces the exchange of GDP to GTP. It remains bound to the aminoacyl-tRNA.EF-Tu.GTP complex up to the GTP hydrolysis stage on the ribosome. This chain is Elongation factor Ts, found in Nitrosospira multiformis (strain ATCC 25196 / NCIMB 11849 / C 71).